The primary structure comprises 224 residues: Synaptogyrin-2 (224 aa).

Position 1 is an N-acetylmethionine (methionine 1). Phosphoserine is present on serine 3. In terms of domain architecture, MARVEL spans 20-171 (YVSQPQVVTR…LASLAYQRYK (152 aa)). The next 4 membrane-spanning stretches (helical) occupy residues 30-50 (LVSM…GYIN), 73-93 (AIGV…AFFS), 105-125 (VIGD…GFCF), and 147-167 (AAIT…SLAY).

It belongs to the synaptogyrin family. Post-translationally, may be tyrosine phosphorylated by Src. In terms of tissue distribution, ubiquitously expressed with lower expression in brain (at protein level).

The protein localises to the cytoplasmic vesicle membrane. Its subcellular location is the cytoplasmic vesicle. It localises to the secretory vesicle. It is found in the synaptic vesicle membrane. May play a role in regulated exocytosis. In neuronal cells, modulates the localization of synaptophysin/SYP into synaptic-like microvesicles and may therefore play a role in the formation and/or the maturation of this vesicles. May also play a role in GLUT4 storage and transport to the plasma membrane. The protein is Synaptogyrin-2 of Rattus norvegicus (Rat).